The chain runs to 548 residues: Natural resistance-associated macrophage protein 1 (548 aa).

The tract at residues 1–38 (MPGDMGPPKQGGTRYGSISSPPSPGPQQAPPGGTYLSE) is disordered. Residues 1 to 55 (MPGDMGPPKQGGTRYGSISSPPSPGPQQAPPGGTYLSEKIPIPDTESGAFSLRKL) lie on the Cytoplasmic side of the membrane. A helical transmembrane segment spans residues 56–73 (WAFTGPGFLMSIAFLDPG). The Extracellular portion of the chain corresponds to 74-82 (NIESDLQAG). A helical membrane pass occupies residues 83 to 102 (AVAGFKLLWVLLWATVLGLL). Topologically, residues 103 to 139 (CQRLAARLGVVTGKDLGEVCHLYYPKVPRILLWLTIE) are cytoplasmic. The chain crosses the membrane as a helical span at residues 140–160 (LAIVGSDMQEVIGTAIAFSLL). Residues 161–164 (SAGR) lie on the Extracellular side of the membrane. Residues 165-184 (IPLWGGVLITIVDTFFFLFL) form a helical membrane-spanning segment. The Cytoplasmic segment spans residues 185 to 193 (DNYGLRKLE). Residues 194 to 214 (AFFGFLITIMALTFGYEYVVA) form a helical membrane-spanning segment. At 215–237 (RPAQGALLQGLFLPSCAGCGQPE) the chain is on the extracellular side. The chain crosses the membrane as a helical span at residues 238-256 (LLQAVGIVGAIIMPHNIYL). At 257 to 284 (HSSLVKSREVDRSRRADIREANMYFLIE) the chain is on the cytoplasmic side. A helical transmembrane segment spans residues 285-304 (ATIALSVSFLINLFVMAVFG). The Extracellular segment spans residues 305 to 346 (QAFYKQTNQAAFNICANSSLHDYATIFPRNNLTVAVDIYQGG). Asparagine 321 and asparagine 335 each carry an N-linked (GlcNAc...) asparagine glycan. Residues 347–366 (VILGCLFGPAALYIWAVGLL) form a helical membrane-spanning segment. Topologically, residues 367 to 397 (AAGQSSTMTGTYAGQFVMEGFLKLRWSRFAR) are cytoplasmic. The chain crosses the membrane as a helical span at residues 398 to 415 (VLLTRSCAILPTVLVAVF). The Extracellular segment spans residues 416–426 (RDLRDLSGLND). The chain crosses the membrane as a helical span at residues 427 to 447 (LLNVLQSLLLPFAVLPILTFT). Residues 448–463 (SMPAVMQEFANGLVSK) lie on the Cytoplasmic side of the membrane. A helical transmembrane segment spans residues 464 to 485 (VISSSIMVLVCAVNLYFVISYV). Residues 486 to 493 (PSLPHPDY) lie on the Extracellular side of the membrane. The helical transmembrane segment at 494–513 (FSLVALLAAAYLGLTTYLVW) threads the bilayer. The Cytoplasmic segment spans residues 514-548 (TCLITQGATLLAHSSHQRFLYGLPEEDQENGRTSG).

The protein belongs to the NRAMP family.

It localises to the late endosome membrane. The protein resides in the lysosome membrane. It catalyses the reaction Zn(2+)(in) + H(+)(out) = Zn(2+)(out) + H(+)(in). The enzyme catalyses Fe(2+)(in) + H(+)(out) = Fe(2+)(out) + H(+)(in). The catalysed reaction is Mn(2+)(in) + H(+)(out) = Mn(2+)(out) + H(+)(in). In terms of biological role, macrophage-specific antiporter that fluxes metal ions in either direction against a proton gradient. Localized to late endosomal lysosomal membranes, delivers bivalent cations from the cytosol into these acidic compartments where they may directly affect antimicrobial activity. Involved in iron metabolism and host natural resistance to infection with intracellular parasites. Pathogen resistance involves sequestration of Fe(2+) and Mn(2+), cofactors of both prokaryotic and eukaryotic catalases and superoxide dismutases, not only to protect the macrophage against its own generation of reactive oxygen species, but to deny the cations to the pathogen for synthesis of its protective enzymes. In Cervus elaphus (Red deer), this protein is Natural resistance-associated macrophage protein 1 (SLC11A1).